Consider the following 304-residue polypeptide: 17-beta-hydroxysteroid dehydrogenase 13 (304 aa).

Residues 1–19 (MNLILEFLLLVGVIIYSYL) form the signal peptide. Position 33 is a phosphoserine (Ser33). 40 to 67 (LITGAGHGIGRLTAYEFAKQKSRLVLWD) contributes to the NAD(+) binding site. Lys79 is modified (N6-acetyllysine). Substrate is bound at residue Ser172. Residue Tyr185 is the Proton acceptor of the active site. Residue Lys189 participates in NAD(+) binding. The tract at residues 276–304 (SSKHPHGGSQQPVTPIPGDLTPSSDFLKH) is disordered.

Belongs to the short-chain dehydrogenases/reductases (SDR) family. In terms of tissue distribution, expressed predominantly in the liver (at protein level).

It is found in the lipid droplet. The protein localises to the endoplasmic reticulum. The catalysed reaction is 17beta-estradiol + NAD(+) = estrone + NADH + H(+). It carries out the reaction all-trans-retinol + NAD(+) = all-trans-retinal + NADH + H(+). The enzyme catalyses all-trans-retinal + NAD(+) + H2O = all-trans-retinoate + NADH + 2 H(+). Functionally, plays a pivotal role in hepatic lipid metabolism. In vitro, it catalyzes the oxidation of a variety of lipid substrates, including 17beta-estradiol, retinol, retinal, and leukotriene B4. This Mus musculus (Mouse) protein is 17-beta-hydroxysteroid dehydrogenase 13 (Hsd17b13).